The chain runs to 758 residues: Calcium up-regulated protein E (758 aa).

The disordered stretch occupies residues 1–22 (MINIEDISKSSNQSEEKQLKST). Ricin B-type lectin domains lie at 25 to 145 (KPKY…WTTF) and 156 to 288 (GYFQ…WIAN).

It belongs to the cup family.

The protein localises to the cytoplasm. It localises to the membrane. Functionally, may play an important role in stabilizing and/or regulating the cell membrane during Ca(2+) stress or certain stages of development. This chain is Calcium up-regulated protein E (cupE), found in Dictyostelium discoideum (Social amoeba).